The following is a 499-amino-acid chain: Thermostable carboxypeptidase 1 (499 aa).

The Peptidase M32 domain maps to 6–499 (QNETIKQILA…FVRWVKEKYL (494 aa)). The HPF signature appears at 238 to 240 (HPF). Residues 248 to 252 (DVRIT) carry the DXRXT motif. Histidine 269 is a binding site for Co(2+). The short motif at 269–273 (HEFGH) is the HEXXH element. The active-site Proton donor/acceptor is the glutamate 270. The Co(2+) site is built by histidine 273 and glutamate 299. Positions 298–301 (HESQ) match the HES/GQ motif. An I/NRXXA/SD motif is present at residues 350-355 (IRTEAD). A GXXQDXHW motif is present at residues 405–412 (GILQDIHW).

Belongs to the peptidase M32 family. In terms of assembly, homodimer. The cofactor is Co(2+). Mn(2+) is required as a cofactor.

It catalyses the reaction Release of a C-terminal amino acid with broad specificity, except for -Pro.. With respect to regulation, EDTA and DTT reversibly abolish carboxypeptidase activity. Its function is as follows. Broad specificity carboxypetidase that releases amino acids sequentially from the C-terminus, including neutral, aromatic, polar and basic residues, but not Pro, Gly, Asp and Glu. In Pyrococcus furiosus (strain ATCC 43587 / DSM 3638 / JCM 8422 / Vc1), this protein is Thermostable carboxypeptidase 1.